We begin with the raw amino-acid sequence, 354 residues long: Uroporphyrinogen decarboxylase (354 aa).

Residues 27–31, D77, Y153, T208, and H326 contribute to the substrate site; that span reads RQAGR.

Belongs to the uroporphyrinogen decarboxylase family. In terms of assembly, homodimer.

The protein resides in the cytoplasm. It carries out the reaction uroporphyrinogen III + 4 H(+) = coproporphyrinogen III + 4 CO2. It functions in the pathway porphyrin-containing compound metabolism; protoporphyrin-IX biosynthesis; coproporphyrinogen-III from 5-aminolevulinate: step 4/4. Its function is as follows. Catalyzes the decarboxylation of four acetate groups of uroporphyrinogen-III to yield coproporphyrinogen-III. The protein is Uroporphyrinogen decarboxylase of Neisseria gonorrhoeae (strain NCCP11945).